Here is a 362-residue protein sequence, read N- to C-terminus: GDSL esterase/lipase 6 (362 aa).

The signal sequence occupies residues 1–23 (MSSSSSMDLLMCLLLLISPVVLA). The active-site Nucleophile is S38. Residues N50, N103, N107, N195, and N296 are each glycosylated (N-linked (GlcNAc...) asparagine). Catalysis depends on residues D323 and H326.

The protein belongs to the 'GDSL' lipolytic enzyme family.

It localises to the secreted. The protein is GDSL esterase/lipase 6 (GLIP6) of Arabidopsis thaliana (Mouse-ear cress).